Consider the following 501-residue polypeptide: Probable malate:quinone oxidoreductase (501 aa).

This sequence belongs to the MQO family. It depends on FAD as a cofactor.

It carries out the reaction (S)-malate + a quinone = a quinol + oxaloacetate. It functions in the pathway carbohydrate metabolism; tricarboxylic acid cycle; oxaloacetate from (S)-malate (quinone route): step 1/1. The sequence is that of Probable malate:quinone oxidoreductase from Geobacillus kaustophilus (strain HTA426).